A 96-amino-acid polypeptide reads, in one-letter code: Large ribosomal subunit protein uL23 (96 aa).

It belongs to the universal ribosomal protein uL23 family. As to quaternary structure, part of the 50S ribosomal subunit. Contacts protein L29, and trigger factor when it is bound to the ribosome.

In terms of biological role, one of the early assembly proteins it binds 23S rRNA. One of the proteins that surrounds the polypeptide exit tunnel on the outside of the ribosome. Forms the main docking site for trigger factor binding to the ribosome. The polypeptide is Large ribosomal subunit protein uL23 (Syntrophus aciditrophicus (strain SB)).